The following is a 582-amino-acid chain: Histone deacetylase 9-B (582 aa).

The interval 146 to 195 (SNEVKQKLQEFLLSKSTKDITLNGIPQKITQSSKLWYTASHHTSLEQSSP) is interaction with mef2. Over residues 189–205 (SLEQSSPPLGGASSSCK) the composition is skewed to polar residues. Disordered regions lie at residues 189–254 (SLEQ…KEGN), 270–314 (TASS…QSRL), 409–447 (LSSGQSPVHPPSPLAMMENSPSSTRPKLPRHRPLNRTQS), and 496–567 (VHLQ…NQSS). 2 stretches are compositionally biased toward basic and acidic residues: residues 213–224 (DYRDDFPLRKTV) and 238–253 (KVAERRSSPLLRRKEG). Residues 270-289 (TASSSAPGSGPSSPNGACSA) are compositionally biased toward low complexity. The segment covering 295-314 (GPSSLPVTTRTERWPSQSRL) has biased composition (polar residues).

The protein belongs to the histone deacetylase family. HD type 2 subfamily. As to quaternary structure, homodimer. Interacts with mef2.

The protein resides in the nucleus. The enzyme catalyses N(6)-acetyl-L-lysyl-[histone] + H2O = L-lysyl-[histone] + acetate. Functionally, devoided of intrinsic deacetylase activity, promotes the deacetylation of lysine residues on the N-terminal part of the core histones (H2A, H2B, H3 and H4) by recruiting other histone deacetylases. Histone deacetylation gives a tag for epigenetic repression and plays an important role in transcriptional regulation, cell cycle progression and developmental events. Represses MEF2-dependent transcription. The polypeptide is Histone deacetylase 9-B (hdac9b) (Danio rerio (Zebrafish)).